Reading from the N-terminus, the 276-residue chain is Large ribosomal subunit protein uL2c (276 aa).

Residues 223-254 (VVKNPIDHPHGGGEGRSPIGRAKPVTPWGQPA) are disordered.

Belongs to the universal ribosomal protein uL2 family. Part of the 50S ribosomal subunit.

It localises to the plastid. It is found in the chloroplast. The sequence is that of Large ribosomal subunit protein uL2c (rpl2) from Emiliania huxleyi (Coccolithophore).